Consider the following 154-residue polypeptide: Aspartate carbamoyltransferase regulatory chain (154 aa).

Residues Cys-109, Cys-114, Cys-138, and Cys-141 each coordinate Zn(2+).

It belongs to the PyrI family. Contains catalytic and regulatory chains. It depends on Zn(2+) as a cofactor.

Functionally, involved in allosteric regulation of aspartate carbamoyltransferase. In Aliivibrio fischeri (strain ATCC 700601 / ES114) (Vibrio fischeri), this protein is Aspartate carbamoyltransferase regulatory chain.